A 1235-amino-acid chain; its full sequence is ATP-dependent helicase/nuclease subunit A (1235 aa).

In terms of domain architecture, UvrD-like helicase ATP-binding spans 12-482 (SLWTDDQWKA…IDLSQNFRSR (471 aa)). Position 33–40 (33–40 (AAAGSGKT)) interacts with ATP. Positions 509–800 (AAELTLGAKS…RMMTIHASKG (292 aa)) constitute a UvrD-like helicase C-terminal domain.

It belongs to the helicase family. AddA subfamily. Heterodimer of AddA and AddB/RexB. It depends on Mg(2+) as a cofactor.

The catalysed reaction is Couples ATP hydrolysis with the unwinding of duplex DNA by translocating in the 3'-5' direction.. It catalyses the reaction ATP + H2O = ADP + phosphate + H(+). Functionally, the heterodimer acts as both an ATP-dependent DNA helicase and an ATP-dependent, dual-direction single-stranded exonuclease. Recognizes the chi site generating a DNA molecule suitable for the initiation of homologous recombination. The AddA nuclease domain is required for chi fragment generation; this subunit has the helicase and 3' -&gt; 5' nuclease activities. This is ATP-dependent helicase/nuclease subunit A from Listeria monocytogenes serotype 4a (strain HCC23).